A 92-amino-acid chain; its full sequence is Signal peptidase complex subunit 1 (92 aa).

Residues 1-12 (MDWQGQKLVEQL) are Cytoplasmic-facing. A helical membrane pass occupies residues 13–30 (MQILLVISGVVAVVVGYT). The Lumenal segment spans residues 31 to 36 (TESFRT). The helical transmembrane segment at 37–59 (MMLIYAGGVVLTTLVTVPNWPFY) threads the bilayer. Over 60–92 (NLHPLKWLDPSEAEKHPKPEVVSVASKKKFSKK) the chain is Cytoplasmic. Residues 73–92 (EKHPKPEVVSVASKKKFSKK) form a disordered region.

It belongs to the SPCS1 family. Component of the signal peptidase complex (SPC) composed of a catalytic subunit SEC11 and three accessory subunits SPCS1, SPCS2 and SPCS3. The complex induces a local thinning of the ER membrane which is used to measure the length of the signal peptide (SP) h-region of protein substrates. This ensures the selectivity of the complex towards h-regions shorter than 18-20 amino acids.

It is found in the endoplasmic reticulum membrane. Its function is as follows. Component of the signal peptidase complex (SPC) which catalyzes the cleavage of N-terminal signal sequences from nascent proteins as they are translocated into the lumen of the endoplasmic reticulum. Dispensable for SPC enzymatic activity. The chain is Signal peptidase complex subunit 1 from Arabidopsis thaliana (Mouse-ear cress).